The following is a 618-amino-acid chain: MFDLEYQLKNLPDKPGVYLMKNNLGEIIYVGKAKILKNRVRQYFQKSQKHSEKVKAMVKNIEEFEYIITDSEIEALILECNLIKKYRPKYNILLKDDKHYPFIKVTLAEDFPRVVSTRKVTKDGSKYFGPYVDGSSVKDIIELIKKTFPIRTCKKNIVEGAKAIRPCLNYQIGLCKAPCAQYIKKSEYREIIDDVIKLLSGKHLDIVENFKLNMEKAAENLEFEKAAMLRDKINIIEKIGEKQKIILNNFDNEDYISLYSDGKDTCFQVFFLRNGKIVGREHFIIEDTFDTNSSTLISNFLKEFYGGTAYIPKTIYVPSIEDEALLEQWLTLKKESKSTIKIPIKGEKKNILVLVEKNAKTTLENFKLKYLQEKALYDNVLKDLKNILRLQEEPIRIEAFDISNIQGFDSVGSMVVFEKGRAKPSDYRRFKINTVKGADDYKSMKEILTRRFQHGLSEIKSIQDRKLEFSSGKFSVFPDLILMDGGKGQINIALEVLNTFNIDIPVCGMVKDNKHRTRGLIYNGEEIIINKYGSVMKFITRVQDEVHRFAISYHRSLRGKNSFHSLLDDIPNIGEKRKKDLLFNFKSIDNIKKATYEELLSIPSMDKKSAECVLEFFK.

Residues Asp13 to Ile92 enclose the GIY-YIG domain. One can recognise a UVR domain in the interval Leu204–Ile239.

This sequence belongs to the UvrC family. In terms of assembly, interacts with UvrB in an incision complex.

The protein resides in the cytoplasm. In terms of biological role, the UvrABC repair system catalyzes the recognition and processing of DNA lesions. UvrC both incises the 5' and 3' sides of the lesion. The N-terminal half is responsible for the 3' incision and the C-terminal half is responsible for the 5' incision. This Clostridium botulinum (strain Okra / Type B1) protein is UvrABC system protein C.